Here is a 438-residue protein sequence, read N- to C-terminus: Putative galacturan 1,4-alpha-galacturonidase A (438 aa).

An N-terminal signal peptide occupies residues 1 to 21; that stretch reads MRMPSAISIGVFAGLSLAASA. N-linked (GlcNAc...) asparagine glycosylation is found at Asn28, Asn102, Asn111, and Asn197. PbH1 repeat units follow at residues 186–222 and 223–244; these read SSHINLDNFYVNATNHDSSVSPEGEWVQNTDGIDTYR and SDHITITNWVYQGGDDAVAFKG. The active-site Proton donor is the Asp237. 7 N-linked (GlcNAc...) asparagine glycosylation sites follow: Asn245, Asn253, Asn279, Asn325, Asn353, Asn372, and Asn388. 3 PbH1 repeats span residues 246–266, 277–303, and 323–344; these read STNIHVENVTVYGGPGIAFGS, VENVTVRNVRVQPSFQRAMNSGVYFKS, and VRNVSVENLRLKDVQLPVYIDT. A disulfide bridge connects residues Cys397 and Cys403. The N-linked (GlcNAc...) asparagine glycan is linked to Asn418.

The protein belongs to the glycosyl hydrolase 28 family.

It localises to the secreted. The catalysed reaction is [(1-&gt;4)-alpha-D-galacturonosyl](n) + H2O = alpha-D-galacturonate + [(1-&gt;4)-alpha-D-galacturonosyl](n-1). Specific in hydrolyzing the terminal glycosidic bond of polygalacturonic acid and oligogalacturonates. The sequence is that of Putative galacturan 1,4-alpha-galacturonidase A (rgxA) from Aspergillus niger.